The chain runs to 1060 residues: DNA-directed RNA polymerase subunit beta (1060 aa).

This sequence belongs to the RNA polymerase beta chain family. In terms of assembly, in plastids the minimal PEP RNA polymerase catalytic core is composed of four subunits: alpha, beta, beta', and beta''. When a (nuclear-encoded) sigma factor is associated with the core the holoenzyme is formed, which can initiate transcription.

Its subcellular location is the plastid. It is found in the chloroplast. The catalysed reaction is RNA(n) + a ribonucleoside 5'-triphosphate = RNA(n+1) + diphosphate. DNA-dependent RNA polymerase catalyzes the transcription of DNA into RNA using the four ribonucleoside triphosphates as substrates. This chain is DNA-directed RNA polymerase subunit beta, found in Lactuca sativa (Garden lettuce).